Reading from the N-terminus, the 198-residue chain is Cyclin-dependent kinase inhibitor 1B (198 aa).

Polar residues predominate over residues 1–11 (MSNVRVSNGSP). A disordered region spans residues 1–22 (MSNVRVSNGSPSLERMDARQAE). A Phosphoserine; by UHMK1 modification is found at Ser-10. Residues 51–91 (DMEEASQRKWNFDFQNHKPLEGKYEWQEVEKGSLPEFYYRP) are interaction with CDK2. Tyr-74 is subject to Phosphotyrosine; by SRC. The segment at 87–198 (FYYRPPRPPK…KKPGLRRRQT (112 aa)) is disordered. Tyr-88 is subject to Phosphotyrosine; by ABL, LYN and SRC. The residue at position 89 (Tyr-89) is a Phosphotyrosine. A compositionally biased stretch (polar residues) spans 104–113 (QESQDVSGNR). A compositionally biased stretch (basic and acidic residues) spans 126–137 (EDTHLVDQKTDT). The short motif at 153–169 (KRPATDDSSPQNKRANR) is the Nuclear localization signal element. Position 157 is a phosphothreonine; by CaMK1, PKB/AKT1 and PIM1 (Thr-157). Thr-170 carries the post-translational modification Phosphothreonine. The span at 175–186 (SDGSPNAGSVEQ) shows a compositional bias: polar residues. Thr-187 bears the Phosphothreonine; by PKB/AKT1, CDK1 and CDK2 mark. Thr-198 bears the Phosphothreonine; by CaMK1, PKB/AKT1, RPS6KA1, RPS6KA3 and PIM1 mark.

This sequence belongs to the CDI family. In terms of assembly, forms a ternary complex composed of CCNE1, CDK2 and CDKN1B. Interacts directly with CCNE1; the interaction is inhibited by CDK2-dependent phosphorylation on Thr-187. Interacts with COPS5, subunit of the COP9 signalosome complex; the interaction leads to CDKN1B degradation. Interacts with NUP50; the interaction leads to nuclear import and degradation of phosphorylated CDKN1B. Interacts with CCND1 and SNX6. Interacts (Thr-198-phosphorylated form) with 14-3-3 proteins, binds strongly YWHAQ, weakly YWHAE and YWHAH, but not YWHAB nor YWHAZ; the interaction with YWHAQ results in translocation to the cytoplasm. Interacts with AKT1 and LYN; the interactions lead to cytoplasmic mislocation, phosphorylation of CDKN1B and inhibition of cell cycle arrest. Forms a ternary complex with CCNA2 and CDK2; CDKN1B inhibits the kinase activity of CDK2 through conformational rearrangements. Interacts (unphosphorylated form) with CDK2. Forms a complex with CDK2 and SPDYA, but does not directly interact with SPDYA. Forms a ternary complex composed of cyclin D, CDK4 and CDKN1B. Interacts (phosphorylated on Tyr-88 and Tyr-89) with CDK4; the interaction is required for cyclin D and CDK4 complex assembly, induces nuclear translocation and activates the CDK4 kinase activity. Interacts with GRB2. Interacts with PIM1. Identified in a complex with SKP1, SKP2 and CKS1B. Interacts with UHMK1; the interaction leads to cytoplasmic mislocation, phosphorylation of CDKN1B and inhibition of cell cycle arrest. Also interacts with CDK1. Dephosphorylated on Thr-187 by PPM1H, leading to CDKN1B stability. Post-translationally, phosphorylated; phosphorylation occurs on serine, threonine and tyrosine residues. Phosphorylation on Ser-10 is the major site of phosphorylation in resting cells, takes place at the G(0)-G(1) phase and leads to protein stability. Phosphorylation on other sites is greatly enhanced by mitogens, growth factors, cMYC and in certain cancer cell lines. The phosphorylated form found in the cytoplasm is inactivate. Phosphorylation on Thr-198 is required for interaction with 14-3-3 proteins. Phosphorylation on Thr-187, by CDK1 and CDK2 leads to protein ubiquitination and proteasomal degradation. Tyrosine phosphorylation promotes this process. Phosphorylation by PKB/AKT1 can be suppressed by LY294002, an inhibitor of the catalytic subunit of PI3K. Phosphorylation on Tyr-88 and Tyr-89 has no effect on binding CDK2, but is required for binding CDK4. Dephosphorylated on tyrosine residues by G-CSF. Dephosphorylated on Thr-187 by PPM1H, leading to CDKN1B stability. Ubiquitinated; in the cytoplasm by the KPC complex (composed of RNF123/KPC1 and UBAC1/KPC2) and, in the nucleus, by SCF(SKP2). The latter requires prior phosphorylation on Thr-187. Ubiquitinated; by a TRIM21-containing SCF(SKP2)-like complex; leads to its degradation. In terms of processing, subject to degradation in the lysosome. Interaction with SNX6 promotes lysosomal degradation.

Its subcellular location is the nucleus. The protein localises to the cytoplasm. It localises to the endosome. Important regulator of cell cycle progression. Inhibits the kinase activity of CDK2 bound to cyclin A, but has little inhibitory activity on CDK2 bound to SPDYA. Involved in G1 arrest. Potent inhibitor of cyclin E- and cyclin A-CDK2 complexes. Forms a complex with cyclin type D-CDK4 complexes and is involved in the assembly, stability, and modulation of CCND1-CDK4 complex activation. Acts either as an inhibitor or an activator of cyclin type D-CDK4 complexes depending on its phosphorylation state and/or stoichometry. The chain is Cyclin-dependent kinase inhibitor 1B (CDKN1B) from Felis catus (Cat).